A 358-amino-acid chain; its full sequence is Phospho-N-acetylmuramoyl-pentapeptide-transferase (358 aa).

A run of 10 helical transmembrane segments spans residues 24-44, 73-93, 95-115, 134-154, 169-189, 197-217, 233-253, 261-281, 286-306, and 335-355; these read FRSI…GPWV, TMGG…WADL, NVFI…GFVD, MFWQ…LPGF, ELGI…SNAV, GLAI…CYIA, GAGE…GFLW, VFMG…LAVL, ILLV…IFQV, and KIIV…ISTL.

It belongs to the glycosyltransferase 4 family. MraY subfamily. It depends on Mg(2+) as a cofactor.

The protein resides in the cell inner membrane. The catalysed reaction is UDP-N-acetyl-alpha-D-muramoyl-L-alanyl-gamma-D-glutamyl-meso-2,6-diaminopimeloyl-D-alanyl-D-alanine + di-trans,octa-cis-undecaprenyl phosphate = di-trans,octa-cis-undecaprenyl diphospho-N-acetyl-alpha-D-muramoyl-L-alanyl-D-glutamyl-meso-2,6-diaminopimeloyl-D-alanyl-D-alanine + UMP. The protein operates within cell wall biogenesis; peptidoglycan biosynthesis. Functionally, catalyzes the initial step of the lipid cycle reactions in the biosynthesis of the cell wall peptidoglycan: transfers peptidoglycan precursor phospho-MurNAc-pentapeptide from UDP-MurNAc-pentapeptide onto the lipid carrier undecaprenyl phosphate, yielding undecaprenyl-pyrophosphoryl-MurNAc-pentapeptide, known as lipid I. This is Phospho-N-acetylmuramoyl-pentapeptide-transferase from Geobacter sp. (strain M21).